The sequence spans 256 residues: uncharacterized protein (256 aa).

The protein to B.subtilis LplA.

This is an uncharacterized protein from Niallia circulans (Bacillus circulans).